The sequence spans 448 residues: U1 small nuclear ribonucleoprotein 70 kDa (448 aa).

Residues threonine 91 to glycine 201 are required for interaction with U1 RNA. The RRM domain maps to arginine 102–alanine 180. The segment at proline 188 to glutamine 448 is disordered. Residues leucine 191–arginine 200 are compositionally biased toward gly residues. Basic and acidic residues-rich tracts occupy residues asparagine 206 to proline 234 and glutamate 262 to arginine 272. Basic residues predominate over residues serine 281–alanine 293. 2 stretches are compositionally biased toward basic and acidic residues: residues glycine 294–arginine 320 and arginine 346–glutamate 376. Positions arginine 405–glycine 425 are mediates binding to Psi. Residues asparagine 426 to glutamine 448 are compositionally biased toward polar residues.

Component of the U1 snRNP. Interacts with Psi; essential for alternative splicing of P-element transposase. Interacts with the SMN complex.

The protein localises to the nucleus speckle. Its subcellular location is the nucleus. The protein resides in the nucleoplasm. Its function is as follows. Mediates the splicing of pre-mRNA by binding to the stem loop I region of U1-snRNA. Required during oogenesis for nurse cell chromatin dispersal. In Drosophila melanogaster (Fruit fly), this protein is U1 small nuclear ribonucleoprotein 70 kDa (snRNP-U1-70K).